The following is a 406-amino-acid chain: Gustatory receptor for sugar taste 64b (406 aa).

Residues 1–47 (MPQGETFHRAVSNVLFISQIYGLLPVSNVRALDVADIRFRWCSPRIL) are Cytoplasmic-facing. A helical membrane pass occupies residues 48–68 (YSLLIGILNLSEFGAVINYVI). The Extracellular portion of the chain corresponds to 69–79 (KVTINFHTSST). A helical membrane pass occupies residues 80-100 (LSLYIVCLLEHLFFWRLAIQW). Residues 101–130 (PRIMRTWHGVEQLFLRVPYRFYGEYRIKRR) are Cytoplasmic-facing. A helical membrane pass occupies residues 131–151 (IYIVFTIVMSSALVEHCLLLG). Over 152–183 (NSFHLSNMERTQCKINVTYFESIYKWERPHLY) the chain is Extracellular. An N-linked (GlcNAc...) asparagine glycan is attached at Asn-167. The helical transmembrane segment at 184–204 (MILPYHFWMLPILEWVNQTIA) threads the bilayer. The Cytoplasmic portion of the chain corresponds to 205 to 265 (YPRSFTDCFI…KRLVHLLDAA (61 aa)). Residues 266 to 286 (IAPLVLLAFGNNMSFICFQLF) form a helical membrane-spanning segment. Topologically, residues 287–290 (NSFK) are extracellular. The chain crosses the membrane as a helical span at residues 291 to 311 (NIGVDFLVMLAFWYSLGFAVV). Residues 312-370 (RTLLTIFVASSINDYERKIVTALRDVPSRAWSIEVQRFSEQLGNDTTALSGSGFFYLTR) lie on the Cytoplasmic side of the membrane. Residues 371–391 (SLVLAMGTTIITYELMISDVI) traverse the membrane as a helical segment. The Extracellular portion of the chain corresponds to 392 to 406 (NQGSIRQKTQYCREY).

Belongs to the insect chemoreceptor superfamily. Gustatory receptor (GR) family. Gr5a subfamily. In terms of tissue distribution, expressed in Gr5a-expressing sugar-sensing cells.

The protein resides in the cell membrane. In terms of biological role, one of the few identified sugar gustatory receptors identified so far and which promotes the starvation-induced increase of feeding motivation. This Drosophila melanogaster (Fruit fly) protein is Gustatory receptor for sugar taste 64b (Gr64b).